The chain runs to 776 residues: E3 ubiquitin-protein ligase UHRF1 (776 aa).

Positions 1–78 (MWIQVRTMDG…VQLLVRQAVA (78 aa)) constitute a Ubiquitin-like domain. Residues 88–126 (AELSDSDSGCGSAQSESDKGSTHGESDVQSAGASGQTDT) form a disordered region. Positions 93–102 (SDSGCGSAQS) are enriched in polar residues. Basic and acidic residues predominate over residues 103–113 (ESDKGSTHGES). Residues 114 to 126 (DVQSAGASGQTDT) are compositionally biased toward polar residues. Tudor-like stretches follow at residues 135–201 (GFYK…PRAR) and 208–277 (QLEP…IEEP). The disordered stretch occupies residues 278–298 (GSAEGPGASSDSPLKKGSNGP). A linker region spans residues 290 to 299 (PLKKGSNGPE). A PHD-type zinc finger spans residues 297 to 364 (GPECKVCKDD…DWYCPDCRND (68 aa)). Histone H3R2me0 binding stretches follow at residues 331-335 (CDECD) and 351-353 (PDD). The 164-residue stretch at 417 to 580 (GPVPGVPVGT…FLVWRYLLKR (164 aa)) folds into the YDG domain. Residues 443–444 (HV) are required to promote base flipping. Residues 461 to 462 (AG) and aspartate 467 each bind DNA. Required for formation of a 5-methylcytosine-binding pocket stretches follow at residues 464–467 (YEDD) and 476–479 (YTGS). Residues 617-660 (EKEKENKNEDDIEETPTKGKRKRKSQSMEEKSSPTKGTPKKMKV) form a disordered region. Serine 649 is modified (phosphoserine; by CDK2). The RING-type zinc-finger motif lies at 706–745 (CICCQEVVYQPITTECQHNVCRECLQRSFKAKVYTCPACR).

Post-translationally, phosphorylation at Ser-649 is required for gastrulation. Expressed in proliferating tissues. Highly expressed 24-48 hours after fertilization (hpf) in rapidly proliferating tissues, including the tectum, retina and brachial arches. Preferentially expressed in the liver bud and expression is maintained in the fully developed liver. Also expressed in the proximal gut. In adult, the highest expression is detected in testis.

It is found in the nucleus. The protein localises to the cytoplasm. It carries out the reaction S-ubiquitinyl-[E2 ubiquitin-conjugating enzyme]-L-cysteine + [acceptor protein]-L-lysine = [E2 ubiquitin-conjugating enzyme]-L-cysteine + N(6)-ubiquitinyl-[acceptor protein]-L-lysine.. Its pathway is protein modification; protein ubiquitination. Multidomain protein that acts as a key epigenetic regulator by bridging DNA methylation and chromatin modification. Specifically recognizes and binds hemimethylated DNA at replication forks via its YDG domain and recruits dnmt1 methyltransferase to ensure faithful propagation of the DNA methylation patterns through DNA replication. In addition to its role in maintenance of DNA methylation, also plays a key role in chromatin modification: through its tudor-like regions and PHD-type zinc fingers, specifically recognizes and binds histone H3 trimethylated at 'Lys-9' (H3K9me3) and unmethylated at 'Arg-2' (H3R2me0), respectively, and recruits chromatin proteins. Enriched in pericentric heterochromatin where it recruits different chromatin modifiers required for this chromatin replication. Also localizes to euchromatic regions where it negatively regulates transcription possibly by impacting DNA methylation and histone modifications. Has E3 ubiquitin-protein ligase activity by mediating the ubiquitination of target proteins. However, it is still unclear how E3 ubiquitin-protein ligase activity is related to its role in chromatin in vivo. Required for pregastrula and lens development. The protein is E3 ubiquitin-protein ligase UHRF1 (uhrf1) of Danio rerio (Zebrafish).